Consider the following 1447-residue polypeptide: Calcium-dependent secretion activator (1447 aa).

Positions 1-15 (MIDPSSSEEEGEDDA) are enriched in acidic residues. Disordered stretches follow at residues 1–35 (MIDP…TSAV) and 101–163 (DTGN…EEEE). Composition is skewed to polar residues over residues 18 to 32 (NVSS…TKGT) and 111 to 126 (GIPS…QSVG). The segment covering 127 to 144 (SSRANSLPRPLSPSPSLT) has biased composition (low complexity). Residues 145–163 (SEKHETAEPHGKHEREEEE) show a composition bias toward basic and acidic residues. In terms of domain architecture, C2 spans 417–547 (SKYGLQKLKR…PLSSKSPEWH (131 aa)). The PH domain occupies 573-683 (NMKHCGYLYA…WVMAMYRATG (111 aa)). An MHD1 domain is found at 970-1157 (VDMDRVLSEQ…DMIEQCIQRT (188 aa)). The segment covering 1386 to 1395 (REGEEEDNGD) has biased composition (acidic residues). The segment at 1386 to 1406 (REGEEEDNGDESTSNIPRGLP) is disordered.

As to expression, restricted to the nervous system at all stages of development and highly localized at synapses (at protein level).

The protein resides in the cytoplasmic vesicle membrane. The protein localises to the synapse. Calcium-binding protein involved in exocytosis of vesicles filled with neurotransmitters and neuropeptides. May specifically mediate the Ca(2+)-dependent exocytosis of large dense-core vesicles (DCVs) and other dense-core vesicles. However, it probably also participates in small clear synaptic vesicles (SVs) exocytosis and it is unclear whether its function is related to Ca(2+) triggering. The polypeptide is Calcium-dependent secretion activator (Drosophila melanogaster (Fruit fly)).